Here is a 612-residue protein sequence, read N- to C-terminus: UBA domain-containing protein 6 (612 aa).

The 40-residue stretch at 3–42 (DLDTKIKTLKNMGVSESDAKDSLERCGYDVESAAEFIFSG) folds into the UBA domain. Ser595 carries the phosphoserine modification.

Its subcellular location is the cytoplasm. It is found in the nucleus. This Schizosaccharomyces pombe (strain 972 / ATCC 24843) (Fission yeast) protein is UBA domain-containing protein 6 (ucp6).